The following is a 284-amino-acid chain: Ermin (284 aa).

The segment at 1–23 is disordered; sequence MTDVPATFTQAECNGDKPPENGQ. The residue at position 73 (Ser73) is a Phosphoserine. The interval 110-251 is disordered; sequence REGHQWEKIP…PTLGKKSDIS (142 aa). Basic and acidic residues-rich tracts occupy residues 126-140 and 171-183; these read EIRR…QPLK and LHSK…KVWD. The span at 184–200 shows a compositional bias: acidic residues; sequence EEIDDDDDDNCNNDEDE. Over residues 201–220 the composition is skewed to basic and acidic residues; sequence VRVIEFKKKHEEVSQFKEEG. Phosphoserine is present on residues Ser214, Ser226, Ser230, and Ser233. The segment covering 225–235 has biased composition (low complexity); the sequence is DSPLSSASSQA. Thr237 carries the phosphothreonine modification. Positions 265 to 284 are binds actin; sequence KIRKGNTKQRIDEFESMMHL.

Binds actin. Highly expressed in adult and fetal brain. Expressed at intermediate levels in the lung and liver.

It is found in the cytoplasm. The protein localises to the cytoskeleton. Its function is as follows. Plays a role in cytoskeletal rearrangements during the late wrapping and/or compaction phases of myelinogenesis as well as in maintenance and stability of myelin sheath in the adult. May play an important role in late-stage oligodendroglia maturation, myelin/Ranvier node formation during CNS development, and in the maintenance and plasticity of related structures in the mature CNS. The sequence is that of Ermin (ERMN) from Homo sapiens (Human).